We begin with the raw amino-acid sequence, 351 residues long: Anthranilate phosphoribosyltransferase (351 aa).

5-phospho-alpha-D-ribose 1-diphosphate is bound by residues glycine 80, glycine 83–aspartate 84, threonine 88, asparagine 90–threonine 93, lysine 108–serine 116, and serine 120. Residue glycine 80 coordinates anthranilate. Serine 92 contributes to the Mg(2+) binding site. Asparagine 111 serves as a coordination point for anthranilate. Arginine 166 serves as a coordination point for anthranilate. Positions 229 and 230 each coordinate Mg(2+).

It belongs to the anthranilate phosphoribosyltransferase family. In terms of assembly, homodimer. Mg(2+) serves as cofactor.

The catalysed reaction is N-(5-phospho-beta-D-ribosyl)anthranilate + diphosphate = 5-phospho-alpha-D-ribose 1-diphosphate + anthranilate. It participates in amino-acid biosynthesis; L-tryptophan biosynthesis; L-tryptophan from chorismate: step 2/5. Its function is as follows. Catalyzes the transfer of the phosphoribosyl group of 5-phosphorylribose-1-pyrophosphate (PRPP) to anthranilate to yield N-(5'-phosphoribosyl)-anthranilate (PRA). The chain is Anthranilate phosphoribosyltransferase from Prosthecochloris aestuarii (strain DSM 271 / SK 413).